A 218-amino-acid chain; its full sequence is Calcineurin B-like protein 5 (218 aa).

EF-hand domains are found at residues 35–69, 70–105, 107–142, and 151–186; these read EVEA…FRNK, KTNL…FHPD, PEEQ…LLDE, and AVEM…NPYV.

It belongs to the calcineurin regulatory subunit family. In terms of assembly, homodimer. Expressed at low levels in roots, shoots, culms, leaves and young spikelets.

In terms of biological role, acts as a calcium sensor. CBL proteins interact with CIPK serine-threonine protein kinases. Binding of a CBL protein to the regulatory NAF domain of a CIPK protein lead to the activation of the kinase in a calcium-dependent manner. The chain is Calcineurin B-like protein 5 (CBL5) from Oryza sativa subsp. japonica (Rice).